Here is a 171-residue protein sequence, read N- to C-terminus: Protein-export protein SecB (171 aa).

This sequence belongs to the SecB family. Homotetramer, a dimer of dimers. One homotetramer interacts with 1 SecA dimer.

It localises to the cytoplasm. Functionally, one of the proteins required for the normal export of preproteins out of the cell cytoplasm. It is a molecular chaperone that binds to a subset of precursor proteins, maintaining them in a translocation-competent state. It also specifically binds to its receptor SecA. This chain is Protein-export protein SecB, found in Xanthomonas oryzae pv. oryzae (strain MAFF 311018).